A 767-amino-acid polypeptide reads, in one-letter code: MENSILLHSGNQFHPNLPLLALRPKKLSLIHGSSREQMWRIKRVKATGENSGEAASADESNDALQVTIEKSKKVLAMQQDLLQQIAERRKVVSSIKSSLANAKGTYDGGSGSLSDVDIPDVDKDYNVTVPSTAATPITDVDKNTPPAISQDFVESKREIKRDLADERAPPLSRSSITASSQISSTVSSKRTLNVPPETPKSSQETLLDVNSRKSLVDVPGKKIQSYMPSLRKESSASHVEQRNENLEGSSAEANEETEDPVNIDEKPPPLAGTNVMNIILVASECAPWSKTGGLGDVAGALPKALARRGHRVMVVAPRYDNYPEPQDSGVRKIYKVDGQDVEVTYFQAFIDGVDFVFIDSHMFRHIGNNIYGGNRVDILKRMVLFCKAAIEVPWHVPCGGVCYGDGNLVFIANDWHTALLPVYLKAYYRDNGIMNYTRSVLVIHNIAHQGRGPLEDFSYVDLPPHYMDPFKLYDPVGGEHFNIFAAGLKTADRVVTVSHGYSWELKTSQGGWGLHQIINENDWKLQGIVNGIDTKEWNPELDVHLQSDGYMNYSLDTLQTGKPQCKAALQKELGLPVRDDVPLIGFIGRLDPQKGVDLIAEAVPWMMGQDVQLVMLGTGRRDLEQMLRQFECQHNDKIRGWVGFSVKTSHRITAGADILLMPSRFEPCGLNQLYAMKYGTIPVVHAVGGLRDTVQPFDPFNESGLGWTFSRAEASQLIHALGNCLLTYREYKKSWEGIQTRCMTQDLSWDNAAQNYEEVLIAAKYQW.

Residues methionine 1–lysine 45 constitute a chloroplast transit peptide. Disordered stretches follow at residues lysine 160–glutamate 204 and tyrosine 226–proline 268. A compositionally biased stretch (low complexity) spans serine 172 to serine 188. Over residues leucine 230–asparagine 245 the composition is skewed to basic and acidic residues. Residues alanine 253–asparagine 262 are compositionally biased toward acidic residues. Lysine 290 serves as a coordination point for ADP-alpha-D-glucose.

It belongs to the glycosyltransferase 1 family. Bacterial/plant glycogen synthase subfamily.

It is found in the plastid. It localises to the chloroplast. The protein localises to the amyloplast. It carries out the reaction [(1-&gt;4)-alpha-D-glucosyl](n) + ADP-alpha-D-glucose = [(1-&gt;4)-alpha-D-glucosyl](n+1) + ADP + H(+). The protein operates within glycan biosynthesis; starch biosynthesis. Accounts for only 10 to 15% of the total soluble starch synthase activity in tubers. The protein is Granule-bound starch synthase 2, chloroplastic/amyloplastic (SS2) of Solanum tuberosum (Potato).